The sequence spans 126 residues: Aspartate 1-decarboxylase (126 aa).

Ser25 serves as the catalytic Schiff-base intermediate with substrate; via pyruvic acid. Ser25 is modified (pyruvic acid (Ser)). Substrate is bound at residue Thr57. Tyr58 functions as the Proton donor in the catalytic mechanism. 73-75 (GAA) is a substrate binding site.

It belongs to the PanD family. In terms of assembly, heterooctamer of four alpha and four beta subunits. Pyruvate serves as cofactor. In terms of processing, is synthesized initially as an inactive proenzyme, which is activated by self-cleavage at a specific serine bond to produce a beta-subunit with a hydroxyl group at its C-terminus and an alpha-subunit with a pyruvoyl group at its N-terminus.

The protein resides in the cytoplasm. It carries out the reaction L-aspartate + H(+) = beta-alanine + CO2. It functions in the pathway cofactor biosynthesis; (R)-pantothenate biosynthesis; beta-alanine from L-aspartate: step 1/1. Functionally, catalyzes the pyruvoyl-dependent decarboxylation of aspartate to produce beta-alanine. The protein is Aspartate 1-decarboxylase of Pseudomonas aeruginosa (strain LESB58).